The chain runs to 398 residues: Deoxyguanosinetriphosphate triphosphohydrolase-like protein (398 aa).

An HD domain is found at 68–215 (RLTHTLEVAQ…AAISDDIAYD (148 aa)).

Belongs to the dGTPase family. Type 2 subfamily.

This Azorhizobium caulinodans (strain ATCC 43989 / DSM 5975 / JCM 20966 / LMG 6465 / NBRC 14845 / NCIMB 13405 / ORS 571) protein is Deoxyguanosinetriphosphate triphosphohydrolase-like protein.